We begin with the raw amino-acid sequence, 397 residues long: Cercosporin biosynthesis regulatory protein CTB8 (397 aa).

The segment at residues 26-53 (CTHCSSQKIRCTKERPACARCVNKGLLC) is a DNA-binding region (zn(2)-C6 fungal-type). Disordered regions lie at residues 62–92 (GTRR…DSVK) and 173–198 (AEAS…ATTH). Residues 74 to 87 (PETTISNAPTSSVP) are compositionally biased toward polar residues. The span at 179-197 (PSSSSSPPSQRSDGGRATT) shows a compositional bias: low complexity.

It is found in the nucleus. Functionally, transcription regulator of the gene cluster that mediates the biosynthesis of cercosporin, a light-activated, non-host-selective toxin. The perylenequinone chromophore of cercosporin absorbs light energy to attain an electronically-activated triplet state and produces active oxygen species such as the hydroxyl radical, superoxide, hydrogen peroxide or singlet oxygen upon reaction with oxygen molecules. These reactive oxygen species cause damage to various cellular components including lipids, proteins and nucleic acids. The polypeptide is Cercosporin biosynthesis regulatory protein CTB8 (Cercospora nicotianae (Barn spot disease fungus)).